We begin with the raw amino-acid sequence, 447 residues long: Na(+)-translocating NADH-quinone reductase subunit A (447 aa).

Belongs to the NqrA family. In terms of assembly, composed of six subunits; NqrA, NqrB, NqrC, NqrD, NqrE and NqrF.

The catalysed reaction is a ubiquinone + n Na(+)(in) + NADH + H(+) = a ubiquinol + n Na(+)(out) + NAD(+). Its function is as follows. NQR complex catalyzes the reduction of ubiquinone-1 to ubiquinol by two successive reactions, coupled with the transport of Na(+) ions from the cytoplasm to the periplasm. NqrA to NqrE are probably involved in the second step, the conversion of ubisemiquinone to ubiquinol. The chain is Na(+)-translocating NADH-quinone reductase subunit A from Photorhabdus laumondii subsp. laumondii (strain DSM 15139 / CIP 105565 / TT01) (Photorhabdus luminescens subsp. laumondii).